The following is a 37-amino-acid chain: Large ribosomal subunit protein bL36 (37 aa).

The protein belongs to the bacterial ribosomal protein bL36 family.

This chain is Large ribosomal subunit protein bL36, found in Psychromonas ingrahamii (strain DSM 17664 / CCUG 51855 / 37).